The sequence spans 302 residues: N-acetylmuramic acid 6-phosphate etherase (302 aa).

One can recognise an SIS domain in the interval Ile58–Lys221. Catalysis depends on Glu86, which acts as the Proton donor. Residue Glu117 is part of the active site.

This sequence belongs to the GCKR-like family. MurNAc-6-P etherase subfamily. As to quaternary structure, homodimer.

It carries out the reaction N-acetyl-D-muramate 6-phosphate + H2O = N-acetyl-D-glucosamine 6-phosphate + (R)-lactate. It participates in amino-sugar metabolism; N-acetylmuramate degradation. Specifically catalyzes the cleavage of the D-lactyl ether substituent of MurNAc 6-phosphate, producing GlcNAc 6-phosphate and D-lactate. This Clostridium botulinum (strain Hall / ATCC 3502 / NCTC 13319 / Type A) protein is N-acetylmuramic acid 6-phosphate etherase.